Consider the following 588-residue polypeptide: Proteasome-associated ATPase (588 aa).

Residues 1–10 are compositionally biased toward basic and acidic residues; that stretch reads MAAHDDDMNR. The disordered stretch occupies residues 1–23; it reads MAAHDDDMNRGIRPGRGSEDPAG. Residues 47–94 are a coiled coil; the sequence is RILEERIVELQTNLAGVSAQNERLAGTLREARDQIVALKEEVDRLAQP. 276–281 contributes to the ATP binding site; that stretch reads GCGKTL. The docks into pockets in the proteasome alpha-ring stretch occupies residues 587-588; that stretch reads YL.

It belongs to the AAA ATPase family. In terms of assembly, homohexamer. Assembles into a hexameric ring structure that caps the 20S proteasome core. Strongly interacts with the prokaryotic ubiquitin-like protein Pup through a hydrophobic interface; the interacting region of ARC lies in its N-terminal coiled-coil domain. There is one Pup binding site per ARC hexamer ring. Upon ATP-binding, the C-terminus of ARC interacts with the alpha-rings of the proteasome core, possibly by binding to the intersubunit pockets.

It participates in protein degradation; proteasomal Pup-dependent pathway. Functionally, ATPase which is responsible for recognizing, binding, unfolding and translocation of pupylated proteins into the bacterial 20S proteasome core particle. May be essential for opening the gate of the 20S proteasome via an interaction with its C-terminus, thereby allowing substrate entry and access to the site of proteolysis. Thus, the C-termini of the proteasomal ATPase may function like a 'key in a lock' to induce gate opening and therefore regulate proteolysis. This is Proteasome-associated ATPase from Streptomyces coelicolor (strain ATCC BAA-471 / A3(2) / M145).